The primary structure comprises 941 residues: Bifunctional glutamine synthetase adenylyltransferase/adenylyl-removing enzyme (941 aa).

Residues 1–431 (MSSAPPFAAA…TFRNAFRLAG (431 aa)) form an adenylyl removase region. Residues 447-941 (NGHGMRPHAG…DGTIAQAEVK (495 aa)) form an adenylyl transferase region.

Belongs to the GlnE family. Mg(2+) is required as a cofactor.

It carries out the reaction [glutamine synthetase]-O(4)-(5'-adenylyl)-L-tyrosine + phosphate = [glutamine synthetase]-L-tyrosine + ADP. It catalyses the reaction [glutamine synthetase]-L-tyrosine + ATP = [glutamine synthetase]-O(4)-(5'-adenylyl)-L-tyrosine + diphosphate. Its function is as follows. Involved in the regulation of glutamine synthetase GlnA, a key enzyme in the process to assimilate ammonia. When cellular nitrogen levels are high, the C-terminal adenylyl transferase (AT) inactivates GlnA by covalent transfer of an adenylyl group from ATP to specific tyrosine residue of GlnA, thus reducing its activity. Conversely, when nitrogen levels are low, the N-terminal adenylyl removase (AR) activates GlnA by removing the adenylyl group by phosphorolysis, increasing its activity. The regulatory region of GlnE binds the signal transduction protein PII (GlnB) which indicates the nitrogen status of the cell. This chain is Bifunctional glutamine synthetase adenylyltransferase/adenylyl-removing enzyme, found in Bordetella bronchiseptica (strain ATCC BAA-588 / NCTC 13252 / RB50) (Alcaligenes bronchisepticus).